We begin with the raw amino-acid sequence, 162 residues long: NADPH-dependent 7-cyano-7-deazaguanine reductase (162 aa).

Cys-53 (thioimide intermediate) is an active-site residue. Asp-60 functions as the Proton donor in the catalytic mechanism. Substrate contacts are provided by residues 75–77 (VES) and 94–95 (HE).

It belongs to the GTP cyclohydrolase I family. QueF type 1 subfamily.

Its subcellular location is the cytoplasm. It carries out the reaction 7-aminomethyl-7-carbaguanine + 2 NADP(+) = 7-cyano-7-deazaguanine + 2 NADPH + 3 H(+). It participates in tRNA modification; tRNA-queuosine biosynthesis. Catalyzes the NADPH-dependent reduction of 7-cyano-7-deazaguanine (preQ0) to 7-aminomethyl-7-deazaguanine (preQ1). This is NADPH-dependent 7-cyano-7-deazaguanine reductase from Exiguobacterium sp. (strain ATCC BAA-1283 / AT1b).